The chain runs to 308 residues: Glutaminase (308 aa).

Substrate-binding residues include Ser66, Asn117, Glu161, Asn168, Tyr192, Tyr244, and Val262.

This sequence belongs to the glutaminase family. Homotetramer.

The catalysed reaction is L-glutamine + H2O = L-glutamate + NH4(+). The polypeptide is Glutaminase (Salmonella choleraesuis (strain SC-B67)).